The sequence spans 1059 residues: Tyrosine-protein kinase-like otk (1059 aa).

The first 23 residues, Met1–Gly23, serve as a signal peptide directing secretion. The Extracellular segment spans residues Ser24–Ala597. Ig-like C2-type domains follow at residues Ser28–Ser112, Pro113–Ser202, Pro258–Asn377, Pro380–Asn475, and Pro480–Thr570. N-linked (GlcNAc...) asparagine glycosylation occurs at Asn42. 4 disulfide bridges follow: Cys49–Cys99, Cys141–Cys191, Cys283–Cys366, and Cys411–Cys459. Asn348, Asn429, Asn441, Asn456, Asn469, Asn524, and Asn536 each carry an N-linked (GlcNAc...) asparagine glycan. A disulfide bond links Cys502 and Cys554. The chain crosses the membrane as a helical span at residues Val598–Trp618. Residues Cys619 to Glu1059 are Cytoplasmic-facing. The segment at Gly639–Ser695 is disordered. The segment covering Gln665 to Arg693 has biased composition (polar residues). Phosphoserine is present on Ser698. The Protein kinase; inactive domain occupies Leu712–Met1055. The disordered stretch occupies residues Ala739 to Met781. The span at Asn742–Ser753 shows a compositional bias: basic and acidic residues.

Belongs to the protein kinase superfamily. Tyr protein kinase family. Insulin receptor subfamily. As to quaternary structure, interacts with plexA; component of a receptor complex that mediates the repulsive signaling in response to Semaphorin ligands.

It localises to the cell membrane. Its function is as follows. Acts as a calcium-dependent, homophilic cell adhesion molecule that regulates neural recognition during the development of the nervous system. Component of the repulsive Plexin signaling response to regulate motor axon guidance at the embryonic stage. Also component of a receptor complex that is required in the adult visual system to innervate the lamina layer; specific targeting of R1-R6 axons. This Drosophila willistoni (Fruit fly) protein is Tyrosine-protein kinase-like otk.